The primary structure comprises 486 residues: Cardiolipin synthase A (486 aa).

2 helical membrane-spanning segments follow: residues 3–23 (TFYT…IAGV) and 38–58 (MAWL…YLSF). PLD phosphodiesterase domains are found at residues 219-246 (MDLR…VDPR) and 399-426 (EGGL…DMRS). Residues histidine 224, lysine 226, aspartate 231, histidine 404, lysine 406, and aspartate 411 contribute to the active site.

It belongs to the phospholipase D family. Cardiolipin synthase subfamily. ClsA sub-subfamily.

The protein resides in the cell inner membrane. The enzyme catalyses 2 a 1,2-diacyl-sn-glycero-3-phospho-(1'-sn-glycerol) = a cardiolipin + glycerol. Catalyzes the reversible phosphatidyl group transfer from one phosphatidylglycerol molecule to another to form cardiolipin (CL) (diphosphatidylglycerol) and glycerol. This is Cardiolipin synthase A from Escherichia fergusonii (strain ATCC 35469 / DSM 13698 / CCUG 18766 / IAM 14443 / JCM 21226 / LMG 7866 / NBRC 102419 / NCTC 12128 / CDC 0568-73).